The primary structure comprises 610 residues: MMDEQRKAEYESQSLQLRAELKQFEAEWAQKNDGKKPSREAIKQNPDIAQKYKQYNKLRDILSGKIPPPTKSNNQDPSQRKRKQPETSLPSASTPSKRNRSAATPKSQHYSAVHEAITPDVARKLFSPAVPSSIGPTPQKDGRVLGLFDLISHTPSKSTDETKPRASGFTATPSNRRHALDLENDKDDDDHDEKDGKEFITPSIPRHRNLDRTPSSGRNRNLLDSFLGVRATKTSTPLNKNTGNSPSKNNLTKTPSGERSVSKLQFATPAFLRRTSAPLPPVDENGEWLDIEPLKLPRKPFSIAKGKGLSSVVASLRKMEEEKLDEELDMLREMEAMEQGGMGPPPPKQTVASTSEDTEKKKQVTDPAGAEVVPEEENSFEEDEAALIEVEASFLESPSSKRKKERRPVLLSGFDDENFYDSQDEEDLSKEGLDRNGQPLRVFKKKGQKRTTRKVNMRPTRTKRPSAPIAEEEDDGEEEHNDVIPETQFDATKNLDGDDHHTLDSLSSGGSGSEFDDGSEGEDEEAETSTTKAAKAAAKKKAPSAKEKTKKDATTETKKKKGTKEGGDEEPAKKPRMVKATANANFKRLKLKNNGAKGGPAHNSRFRRRR.

Residues 28–42 (WAQKNDGKKPSREAI) are compositionally biased toward basic and acidic residues. Disordered stretches follow at residues 28–115 (WAQK…AVHE), 127–261 (SPAV…ERSV), and 338–610 (EQGG…RRRR). Composition is skewed to polar residues over residues 86–110 (ETSL…SQHY) and 232–261 (TKTS…ERSV). 2 stretches are compositionally biased toward acidic residues: residues 373–386 (VPEE…DEAA) and 414–428 (FDDE…EEDL). The segment covering 442–464 (VFKKKGQKRTTRKVNMRPTRTKR) has biased composition (basic residues). The segment covering 470–480 (AEEEDDGEEEH) has biased composition (acidic residues). The span at 493–503 (KNLDGDDHHTL) shows a compositional bias: basic and acidic residues. The segment covering 514–527 (EFDDGSEGEDEEAE) has biased composition (acidic residues). Positions 544–573 (SAKEKTKKDATTETKKKKGTKEGGDEEPAK) are enriched in basic and acidic residues.

It belongs to the SLD2 family.

The protein localises to the cytoplasm. It is found in the nucleus. Functionally, has a role in the initiation of DNA replication. Required at S-phase checkpoint. In Neurospora crassa (strain ATCC 24698 / 74-OR23-1A / CBS 708.71 / DSM 1257 / FGSC 987), this protein is DNA replication regulator sld2 (drc-4).